The sequence spans 177 residues: Peptide methionine sulfoxide reductase MsrA (177 aa).

Residue Cys-15 is part of the active site.

This sequence belongs to the MsrA Met sulfoxide reductase family.

It carries out the reaction L-methionyl-[protein] + [thioredoxin]-disulfide + H2O = L-methionyl-(S)-S-oxide-[protein] + [thioredoxin]-dithiol. The enzyme catalyses [thioredoxin]-disulfide + L-methionine + H2O = L-methionine (S)-S-oxide + [thioredoxin]-dithiol. In terms of biological role, has an important function as a repair enzyme for proteins that have been inactivated by oxidation. Catalyzes the reversible oxidation-reduction of methionine sulfoxide in proteins to methionine. In Listeria innocua serovar 6a (strain ATCC BAA-680 / CLIP 11262), this protein is Peptide methionine sulfoxide reductase MsrA.